The sequence spans 561 residues: DNA ligase B (561 aa).

The active-site N6-AMP-lysine intermediate is the Lys128.

It belongs to the NAD-dependent DNA ligase family. LigB subfamily.

It carries out the reaction NAD(+) + (deoxyribonucleotide)n-3'-hydroxyl + 5'-phospho-(deoxyribonucleotide)m = (deoxyribonucleotide)n+m + AMP + beta-nicotinamide D-nucleotide.. Functionally, catalyzes the formation of phosphodiester linkages between 5'-phosphoryl and 3'-hydroxyl groups in double-stranded DNA using NAD as a coenzyme and as the energy source for the reaction. This chain is DNA ligase B, found in Pseudomonas syringae pv. syringae (strain B728a).